A 628-amino-acid chain; its full sequence is Carbon monoxide dehydrogenase 1 (628 aa).

Cysteine 44, cysteine 52, cysteine 53, cysteine 56, cysteine 61, and cysteine 75 together coordinate [4Fe-4S] cluster. [Ni-4Fe-5S] cluster contacts are provided by histidine 266, cysteine 302, cysteine 340, cysteine 448, cysteine 478, and cysteine 519.

Belongs to the Ni-containing carbon monoxide dehydrogenase family. In terms of assembly, homodimer. The cofactor is [4Fe-4S] cluster. It depends on [Ni-4Fe-5S] cluster as a cofactor.

The enzyme catalyses CO + 2 oxidized [2Fe-2S]-[ferredoxin] + H2O = 2 reduced [2Fe-2S]-[ferredoxin] + CO2 + 2 H(+). Functionally, CODH oxidizes carbon monoxide coupled, via CooF, to the reduction of a hydrogen cation by a hydrogenase (possibly CooH). This chain is Carbon monoxide dehydrogenase 1 (cooS1), found in Methanosarcina acetivorans (strain ATCC 35395 / DSM 2834 / JCM 12185 / C2A).